Reading from the N-terminus, the 81-residue chain is Adipogenin (81 aa).

Residues 16-36 (FLASWLCLPVGLLLFLLIVWL) form a helical membrane-spanning segment.

The protein belongs to the adipogenin family.

The protein localises to the membrane. Its subcellular location is the nucleus. Its function is as follows. Plays a role in stimulating adipocyte differentiation and development. In Sus scrofa (Pig), this protein is Adipogenin.